We begin with the raw amino-acid sequence, 541 residues long: Cytochrome P450 monooxygenase claW (541 aa).

A helical transmembrane segment spans residues 12 to 32 (VINALVILFSFWAFLSLIRVI). Residue C480 participates in heme binding.

It belongs to the cytochrome P450 family. Heme serves as cofactor.

The protein resides in the membrane. The protein operates within secondary metabolite biosynthesis; terpenoid biosynthesis. Its function is as follows. Cytochrome P450 monooxygenase; part of the gene cluster that mediates the biosynthesis of clavilactone A, a meroterpenoid that features a unique benzo-fused ten-membered carbocyclic ring unit with an alpha,beta-epoxy-gamma-lactone moiety, forming an intriguing 10/5/3 tricyclic nested skeleton. Cytochrome P450 monooxygenases claO, claP, claQ, claU, and claW are close orthologs, suggesting that a redundant function or pseudogenes are present in the cla cluster. These monoxygenases are not involved in clavilactone A biosynthesis nor its modification. ClaR, ClaS and ClaT are sufficient to produce clavilactone A. The biosynthesis begins with the prenyltransferase claS that transfers geranyl pyrophosphate (GPP) to hydroquinone to produces geranylhydroquinone. The cytochrome P450 monooxygenase claR then catalyzes the diradical coupling reaction between the intramolecular hydroquinone and allyl moieties to form the benzo-fused ten-membered carbocyclic ring unit of wigantol. Finally the cytochrome P450 monooxygenase claT exquisitely and stereoselectively assembles the alpha,beta-epoxy-gamma-lactone moiety, producing clavilactone A via arnebinol A. This is Cytochrome P450 monooxygenase claW from Ampulloclitocybe clavipes (Club foot).